The primary structure comprises 388 residues: Succinate--CoA ligase [ADP-forming] subunit beta (388 aa).

The region spanning 9 to 245 is the ATP-grasp domain; the sequence is KELLASYGLP…KSQENERELK (237 aa). Residues lysine 46, 53 to 55, glutamate 100, tyrosine 103, and glutamate 108 contribute to the ATP site; that span reads GRG. Residues asparagine 200 and aspartate 214 each coordinate Mg(2+). Substrate is bound by residues asparagine 265 and 322–324; that span reads GIV.

It belongs to the succinate/malate CoA ligase beta subunit family. Heterotetramer of two alpha and two beta subunits. Mg(2+) serves as cofactor.

The catalysed reaction is succinate + ATP + CoA = succinyl-CoA + ADP + phosphate. It carries out the reaction GTP + succinate + CoA = succinyl-CoA + GDP + phosphate. Its pathway is carbohydrate metabolism; tricarboxylic acid cycle; succinate from succinyl-CoA (ligase route): step 1/1. Functionally, succinyl-CoA synthetase functions in the citric acid cycle (TCA), coupling the hydrolysis of succinyl-CoA to the synthesis of either ATP or GTP and thus represents the only step of substrate-level phosphorylation in the TCA. The beta subunit provides nucleotide specificity of the enzyme and binds the substrate succinate, while the binding sites for coenzyme A and phosphate are found in the alpha subunit. The polypeptide is Succinate--CoA ligase [ADP-forming] subunit beta (Neisseria gonorrhoeae (strain NCCP11945)).